The following is a 125-amino-acid chain: Large ribosomal subunit protein bL12 (125 aa).

It belongs to the bacterial ribosomal protein bL12 family. Homodimer. Part of the ribosomal stalk of the 50S ribosomal subunit. Forms a multimeric L10(L12)X complex, where L10 forms an elongated spine to which 2 to 4 L12 dimers bind in a sequential fashion. Binds GTP-bound translation factors.

Functionally, forms part of the ribosomal stalk which helps the ribosome interact with GTP-bound translation factors. Is thus essential for accurate translation. The sequence is that of Large ribosomal subunit protein bL12 from Endomicrobium trichonymphae.